Reading from the N-terminus, the 86-residue chain is Large ribosomal subunit protein bL31m (86 aa).

A mitochondrion-targeting transit peptide spans 1 to 18 (MKCSLRLFEKAGRLSVRS).

Belongs to the bacterial ribosomal protein bL31 family. Highly divergent. In terms of assembly, component of the mitochondrial large ribosomal subunit (mt-LSU). Mature yeast 74S mitochondrial ribosomes consist of a small (37S) and a large (54S) subunit. The 37S small subunit contains a 15S ribosomal RNA (15S mt-rRNA) and at least 32 different proteins. The 54S large subunit contains a 21S rRNA (21S mt-rRNA) and at least 45 different proteins.

Its subcellular location is the mitochondrion. Component of the mitochondrial ribosome (mitoribosome), a dedicated translation machinery responsible for the synthesis of mitochondrial genome-encoded proteins, including at least some of the essential transmembrane subunits of the mitochondrial respiratory chain. The mitoribosomes are attached to the mitochondrial inner membrane and translation products are cotranslationally integrated into the membrane. The polypeptide is Large ribosomal subunit protein bL31m (tam9) (Schizosaccharomyces pombe (strain 972 / ATCC 24843) (Fission yeast)).